Consider the following 236-residue polypeptide: uncharacterized protein (236 aa).

The next 7 membrane-spanning stretches (helical) occupy residues 32-52, 61-81, 90-110, 115-135, 144-164, 167-187, and 208-228; these read MALA…VEPI, FGTI…MGFG, ILFW…ALIY, IART…YGYS, GSFF…NLFL, SSLS…LIAW, and LSIM…LYLM.

Belongs to the BI1 family.

Its subcellular location is the cell membrane. This is an uncharacterized protein from Rickettsia prowazekii (strain Madrid E).